The primary structure comprises 1512 residues: DNA (cytosine-5)-methyltransferase 2 (1512 aa).

A compositionally biased stretch (basic and acidic residues) spans 1 to 22 (METKVGKQKKRSVDSNDDVSKE). 2 disordered regions span residues 1–35 (METK…RNFK) and 634–678 (AIHE…GNSE). Acidic residues predominate over residues 638–662 (VEEEEIEEDEEEDENEEDDIEEEAV). 2 BAH domains span residues 707 to 841 (ETVA…FSLP) and 909 to 1026 (TTLK…KQFP). One can recognise an SAM-dependent MTase C5-type domain in the interval 1071–1505 (LATLDIFAGC…RKLKEALYLK (435 aa)). Residue Cys-1176 is part of the active site.

The protein belongs to the class I-like SAM-binding methyltransferase superfamily. C5-methyltransferase family. Expressed at low levels in vegetative and floral organs.

It localises to the nucleus. The catalysed reaction is a 2'-deoxycytidine in DNA + S-adenosyl-L-methionine = a 5-methyl-2'-deoxycytidine in DNA + S-adenosyl-L-homocysteine + H(+). Maintains chromatin CpG methylation that plays a role in genomic imprinting, regulation of embryogenesis and seed viability. Required for proper patterns of CG DNA methylation in dividing cells. The chain is DNA (cytosine-5)-methyltransferase 2 (MET2) from Arabidopsis thaliana (Mouse-ear cress).